A 367-amino-acid chain; its full sequence is Choline-phosphate cytidylyltransferase A (367 aa).

At M1 the chain carries N-acetylmethionine. Positions 1–32 (MDAQSSAKVNSRKRRKEAPGPNGATEEDGIPS) are disordered. An N6-acetyllysine modification is found at K8. 4 residues coordinate CTP: I84, F85, H92, and K122. Positions 122 and 151 each coordinate phosphocholine. CTP is bound by residues H168, D169, Y173, Q195, R196, T197, and I200. 2 amphipathic regions span residues 228-287 (KELN…EFIG) and 298-315 (ALKH…QAIS). S233 is modified (phosphoserine). Residues 272–293 (IDLIQKWEEKSREFIGSFLEMF) are autoinhibitory (AI). Residues 313–367 (AISPKQSPSSSPTHERSPSPSFRWPFSGKTSPSSSPASLSRCRAVTCDISEDEED) form a disordered region. Phosphoserine is present on residues S315, S319, S321, S322, and S323. Positions 315 to 324 (SPKQSPSSSP) are enriched in polar residues. Copy 1 of the repeat occupies 319 to 324 (SPSSSP). The 3 X repeats stretch occupies residues 319–348 (SPSSSPTHERSPSPSFRWPFSGKTSPSSSP). Phosphothreonine is present on T325. Phosphoserine is present on residues S329, S331, and S333. The 2; approximate repeat unit spans residues 329–333 (SPSPS). Positions 330–352 (PSPSFRWPFSGKTSPSSSPASLS) are enriched in low complexity. T342 is modified (phosphothreonine). Residues S343, S345, S346, S347, S350, and S352 each carry the phosphoserine modification. Residues 343–348 (SPSSSP) form repeat 3. T358 is modified (phosphothreonine). Position 362 is a phosphoserine (S362).

It belongs to the cytidylyltransferase family. In terms of assembly, homodimer. Post-translationally, the serine residues of the C-terminus are phosphorylated. The inactive soluble form is stabilized by phosphorylation, the active membrane bound form is promoted by anionic lipids or diacylglycerol, and is stabilized by dephosphorylation. In terms of processing, monoubiquitinated by the SCF(FBXL2) complex, leading to proteasomal degradation. In terms of tissue distribution, brain and liver (at protein level). Also found in heart, kidney, spleen, lung, skeletal muscle, ovary and testis.

The protein localises to the cytoplasm. It is found in the cytosol. It localises to the membrane. The protein resides in the endoplasmic reticulum membrane. Its subcellular location is the nucleus. The enzyme catalyses phosphocholine + CTP + H(+) = CDP-choline + diphosphate. Its pathway is phospholipid metabolism; phosphatidylcholine biosynthesis; phosphatidylcholine from phosphocholine: step 1/2. Its activity is regulated as follows. Interconverts between an inactive cytosolic form and an active membrane-bound form. Activation involves disruption of an inhibitory interaction between helices at the base of the active site and the autoinhibitory (AI) region. Catalyzes the key rate-limiting step in the CDP-choline pathway for phosphatidylcholine biosynthesis. The polypeptide is Choline-phosphate cytidylyltransferase A (Pcyt1a) (Mus musculus (Mouse)).